The primary structure comprises 399 residues: Chorismate synthase (399 aa).

The tract at residues 41 to 72 (IQKDLDRRKPGQSMITTSRGEPDKVTINSGIQ) is disordered. Arg-48 provides a ligand contact to NADP(+). Residues 125–127 (RSS), Gly-288, 303–307 (HAPVS), and Arg-330 contribute to the FMN site. Composition is skewed to basic and acidic residues over residues 363-377 (PDRL…DTDY) and 389-399 (ADTHAKTIDDD). Positions 363–399 (PDRLDGRPGEYDTDYHPSSPQNDPEDADTHAKTIDDD) are disordered.

This sequence belongs to the chorismate synthase family. It depends on FMNH2 as a cofactor.

The catalysed reaction is 5-O-(1-carboxyvinyl)-3-phosphoshikimate = chorismate + phosphate. It functions in the pathway metabolic intermediate biosynthesis; chorismate biosynthesis; chorismate from D-erythrose 4-phosphate and phosphoenolpyruvate: step 7/7. Its function is as follows. Catalyzes the anti-1,4-elimination of the C-3 phosphate and the C-6 proR hydrogen from 5-enolpyruvylshikimate-3-phosphate (EPSP) to yield chorismate, which is the branch point compound that serves as the starting substrate for the three terminal pathways of aromatic amino acid biosynthesis. This reaction introduces a second double bond into the aromatic ring system. This chain is Chorismate synthase, found in Haloarcula marismortui (strain ATCC 43049 / DSM 3752 / JCM 8966 / VKM B-1809) (Halobacterium marismortui).